Here is a 157-residue protein sequence, read N- to C-terminus: 2-C-methyl-D-erythritol 2,4-cyclodiphosphate synthase (157 aa).

A divalent metal cation-binding residues include Asp8 and His10. 4-CDP-2-C-methyl-D-erythritol 2-phosphate-binding positions include 8 to 10 and 34 to 35; these read DVH and HS. Position 42 (His42) interacts with a divalent metal cation. Residues 56-58, 61-65, 132-135, Phe139, and Arg142 contribute to the 4-CDP-2-C-methyl-D-erythritol 2-phosphate site; these read DIG, FPDSD, and TTTE.

This sequence belongs to the IspF family. Homotrimer. The cofactor is a divalent metal cation.

It catalyses the reaction 4-CDP-2-C-methyl-D-erythritol 2-phosphate = 2-C-methyl-D-erythritol 2,4-cyclic diphosphate + CMP. It functions in the pathway isoprenoid biosynthesis; isopentenyl diphosphate biosynthesis via DXP pathway; isopentenyl diphosphate from 1-deoxy-D-xylulose 5-phosphate: step 4/6. Involved in the biosynthesis of isopentenyl diphosphate (IPP) and dimethylallyl diphosphate (DMAPP), two major building blocks of isoprenoid compounds. Catalyzes the conversion of 4-diphosphocytidyl-2-C-methyl-D-erythritol 2-phosphate (CDP-ME2P) to 2-C-methyl-D-erythritol 2,4-cyclodiphosphate (ME-CPP) with a corresponding release of cytidine 5-monophosphate (CMP). The sequence is that of 2-C-methyl-D-erythritol 2,4-cyclodiphosphate synthase from Syntrophomonas wolfei subsp. wolfei (strain DSM 2245B / Goettingen).